The sequence spans 200 residues: Large ribosomal subunit protein uL4 (200 aa).

A disordered region spans residues 43 to 71 (RAQKTRAEVSGSGKKPWRQKGTGRARSGD).

It belongs to the universal ribosomal protein uL4 family. Part of the 50S ribosomal subunit.

In terms of biological role, one of the primary rRNA binding proteins, this protein initially binds near the 5'-end of the 23S rRNA. It is important during the early stages of 50S assembly. It makes multiple contacts with different domains of the 23S rRNA in the assembled 50S subunit and ribosome. Functionally, forms part of the polypeptide exit tunnel. In Mannheimia succiniciproducens (strain KCTC 0769BP / MBEL55E), this protein is Large ribosomal subunit protein uL4.